A 280-amino-acid chain; its full sequence is Ribosomal RNA small subunit methyltransferase A (280 aa).

Residues Asn-27, Leu-29, Gly-54, Glu-76, Asp-102, and Asn-122 each coordinate S-adenosyl-L-methionine.

It belongs to the class I-like SAM-binding methyltransferase superfamily. rRNA adenine N(6)-methyltransferase family. RsmA subfamily.

It localises to the cytoplasm. It catalyses the reaction adenosine(1518)/adenosine(1519) in 16S rRNA + 4 S-adenosyl-L-methionine = N(6)-dimethyladenosine(1518)/N(6)-dimethyladenosine(1519) in 16S rRNA + 4 S-adenosyl-L-homocysteine + 4 H(+). Specifically dimethylates two adjacent adenosines (A1518 and A1519) in the loop of a conserved hairpin near the 3'-end of 16S rRNA in the 30S particle. May play a critical role in biogenesis of 30S subunits. This Oleidesulfovibrio alaskensis (strain ATCC BAA-1058 / DSM 17464 / G20) (Desulfovibrio alaskensis) protein is Ribosomal RNA small subunit methyltransferase A.